The sequence spans 485 residues: D-alanine--D-alanyl carrier protein ligase (485 aa).

144–145 (TS) contributes to the ATP binding site. Position 189 (Asp-189) interacts with D-alanine. Residue 284 to 289 (NTYGPT) coordinates ATP. Residue Val-293 participates in D-alanine binding. Positions 365 and 473 each coordinate ATP. Lys-473 is a binding site for D-alanine.

The protein belongs to the ATP-dependent AMP-binding enzyme family. DltA subfamily.

The protein resides in the cytoplasm. The catalysed reaction is holo-[D-alanyl-carrier protein] + D-alanine + ATP = D-alanyl-[D-alanyl-carrier protein] + AMP + diphosphate. The protein operates within cell wall biogenesis; lipoteichoic acid biosynthesis. Functionally, catalyzes the first step in the D-alanylation of lipoteichoic acid (LTA), the activation of D-alanine and its transfer onto the D-alanyl carrier protein (Dcp) DltC. In an ATP-dependent two-step reaction, forms a high energy D-alanyl-AMP intermediate, followed by transfer of the D-alanyl residue as a thiol ester to the phosphopantheinyl prosthetic group of the Dcp. D-alanylation of LTA plays an important role in modulating the properties of the cell wall in Gram-positive bacteria, influencing the net charge of the cell wall. In Staphylococcus aureus (strain MRSA252), this protein is D-alanine--D-alanyl carrier protein ligase.